A 272-amino-acid chain; its full sequence is MAAFSSSSSAPMLIRSVLFVSLLSAAFVFDSGEAGAAHRVVDPEWHPATATWYGSADGDGSDGGACGYGTLVDVVPMKTRVGAVSPVLFKGGEGCGACYKVRCLDASICSRRAVTVIVTDECPGGVCAFGRTHFDLSGAAFARLAVAGHGGQLQNRGEISVVYRRTACKYGGKNIAFHVNEGSTTFWLSLLVEFEDGDGDIGSMQLKQANSAQWQDMKHIWGATWSLTPGPLVGPFSVRLTTLTTRQTLSAQDVIPKNWTPKATYTSRLNFA.

A signal peptide spans 1 to 25 (MAAFSSSSSAPMLIRSVLFVSLLSA). Residues 63-173 (GGACGYGTLV…RRTACKYGGK (111 aa)) form the Expansin-like EG45 domain. 3 disulfides stabilise this stretch: Cys-66/Cys-95, Cys-98/Cys-168, and Cys-103/Cys-109. Positions 186-267 (FWLSLLVEFE…NWTPKATYTS (82 aa)) constitute an Expansin-like CBD domain.

The protein belongs to the expansin family. Expansin B subfamily.

The protein resides in the secreted. It is found in the cell wall. Its subcellular location is the membrane. Functionally, may cause loosening and extension of plant cell walls by disrupting non-covalent bonding between cellulose microfibrils and matrix glucans. No enzymatic activity has been found. May be required for rapid internodal elongation in deepwater rice during submergence. In Oryza sativa subsp. japonica (Rice), this protein is Expansin-B16 (EXPB16).